Here is a 201-residue protein sequence, read N- to C-terminus: Recombination protein RecR (201 aa).

The C4-type zinc-finger motif lies at 57–72 (CKLCQIYTEQPLCNIC). Positions 80–175 (TLLCVVESPA…KCSRIAHGVP (96 aa)) constitute a Toprim domain.

This sequence belongs to the RecR family.

Its function is as follows. May play a role in DNA repair. It seems to be involved in an RecBC-independent recombinational process of DNA repair. It may act with RecF and RecO. The protein is Recombination protein RecR of Coxiella burnetii (strain RSA 493 / Nine Mile phase I).